Reading from the N-terminus, the 1698-residue chain is Protein 4.1 homolog (1698 aa).

The segment at 1–31 (MPAEIKPSAPAEPETPTKSKPKSSSSSHGKP) is disordered. Low complexity predominate over residues 12 to 27 (EPETPTKSKPKSSSSS). One can recognise an FERM domain in the interval 32 to 314 (ALARVTLLDG…EHHTFFRLMT (283 aa)). The interval 317–434 (PVSKSKMFPV…KEEKERKERE (118 aa)) is hydrophilic. Disordered regions lie at residues 335-361 (GRTQ…SGAR) and 374-710 (EKEK…SDPT). Residues 374–448 (EKEKVARKSS…EEKKKAEKAA (75 aa)) are compositionally biased toward basic and acidic residues. Residues 449–461 (KAALAAGAAAGAA) show a composition bias toward low complexity. Phosphoserine occurs at positions 471, 474, and 478. Positions 499-514 (KDGKDKSGKDKDKEVG) are enriched in basic and acidic residues. Residues 562-571 (DGNTSPTRKS) show a composition bias toward polar residues. Ser-566 carries the phosphoserine modification. Over residues 579–589 (YDQDPNSRKSG) the composition is skewed to basic and acidic residues. Over residues 594-603 (EQLSPTSQQK) the composition is skewed to polar residues. A compositionally biased stretch (basic and acidic residues) spans 618–627 (ALKETAEKLK). Phosphoserine occurs at positions 659 and 687. Over residues 684–696 (RSYSPTKGPQGYS) the composition is skewed to polar residues. A Phosphothreonine modification is found at Thr-689. Residues Ser-697, Ser-1398, Ser-1401, and Ser-1402 each carry the phosphoserine modification. Positions 1286 to 1698 (GEIVQVDPND…EKIEIQQQTQ (413 aa)) are C-terminal (CTD). A Phosphothreonine modification is found at Thr-1407. Over residues 1509–1532 (LGKNAKTEQLEEKTVATTRTHDPN) the composition is skewed to basic and acidic residues. The interval 1509–1599 (LGKNAKTEQL…SPLFTTSATT (91 aa)) is disordered. The segment covering 1533–1554 (KQQQRVVTQEVKTTATVTSGDQ) has biased composition (polar residues). The span at 1561-1571 (VSSTSSGDSGT) shows a compositional bias: low complexity. The span at 1584–1599 (RTDNQKSPLFTTSATT) shows a compositional bias: polar residues. Phosphoserine is present on Ser-1590.

At onset of germ band retraction, expression is seen in epidermis, hindgut and foregut. During retraction, expression extends to tracheal branches and salivary glands.

The protein resides in the cell junction. It is found in the septate junction. Its function is as follows. An integral component of the septate junction. May play a role in cell-cell interactions that are necessary for proper development. Vital for embryonic development. This chain is Protein 4.1 homolog (cora), found in Drosophila melanogaster (Fruit fly).